The primary structure comprises 284 residues: MVQIIDGKALAQKMQAALAKKVESLKAEKGIVPGLVVILVGDNPASQVYVRNKERAALAAGFKSETVRLSDSVCQEELIELIEQYNQDDTIHGILVQLPLPHHINDKSIILAIDPKKDVDGFHPMNTGHLWSGRPNMVPCTPAGIMEMFRDYGIELEGKNAVIVGRSNIVGKPMAQLLLDKNATVTLTHSRTRQLAAICRRADILIVAIGQGHFITKDFVKEGAVVIDVGMNRDVNGRLIGDVAFDEVSELASMITPVPGGVGPMTITMLLEQTYQAALRRVSQ.

NADP(+) contacts are provided by residues 165–167 (GRS) and serine 190.

The protein belongs to the tetrahydrofolate dehydrogenase/cyclohydrolase family. Homodimer.

The catalysed reaction is (6R)-5,10-methylene-5,6,7,8-tetrahydrofolate + NADP(+) = (6R)-5,10-methenyltetrahydrofolate + NADPH. It carries out the reaction (6R)-5,10-methenyltetrahydrofolate + H2O = (6R)-10-formyltetrahydrofolate + H(+). It participates in one-carbon metabolism; tetrahydrofolate interconversion. Functionally, catalyzes the oxidation of 5,10-methylenetetrahydrofolate to 5,10-methenyltetrahydrofolate and then the hydrolysis of 5,10-methenyltetrahydrofolate to 10-formyltetrahydrofolate. The protein is Bifunctional protein FolD of Streptococcus equi subsp. zooepidemicus (strain MGCS10565).